The chain runs to 483 residues: Aspartyl/glutamyl-tRNA(Asn/Gln) amidotransferase subunit B (483 aa).

Belongs to the GatB/GatE family. GatB subfamily. In terms of assembly, heterotrimer of A, B and C subunits.

It carries out the reaction L-glutamyl-tRNA(Gln) + L-glutamine + ATP + H2O = L-glutaminyl-tRNA(Gln) + L-glutamate + ADP + phosphate + H(+). The catalysed reaction is L-aspartyl-tRNA(Asn) + L-glutamine + ATP + H2O = L-asparaginyl-tRNA(Asn) + L-glutamate + ADP + phosphate + 2 H(+). In terms of biological role, allows the formation of correctly charged Asn-tRNA(Asn) or Gln-tRNA(Gln) through the transamidation of misacylated Asp-tRNA(Asn) or Glu-tRNA(Gln) in organisms which lack either or both of asparaginyl-tRNA or glutaminyl-tRNA synthetases. The reaction takes place in the presence of glutamine and ATP through an activated phospho-Asp-tRNA(Asn) or phospho-Glu-tRNA(Gln). This Rickettsia typhi (strain ATCC VR-144 / Wilmington) protein is Aspartyl/glutamyl-tRNA(Asn/Gln) amidotransferase subunit B.